A 201-amino-acid polypeptide reads, in one-letter code: Holliday junction branch migration complex subunit RuvA (201 aa).

A domain I region spans residues 1–63; that stretch reads MIAYLSGVVR…EDAQLLFGFP (63 aa). The domain II stretch occupies residues 64–142; the sequence is DADHLKLFDL…EHLAAAASGA (79 aa). Positions 143–150 are flexible linker; that stretch reads AGGKRPAR. Residues 151-201 are domain III; it reads VSSTAGHDAVDALLALGFREAQVRAAVAELLGADPEASADTLIRKALGRLR.

The protein belongs to the RuvA family. As to quaternary structure, homotetramer. Forms an RuvA(8)-RuvB(12)-Holliday junction (HJ) complex. HJ DNA is sandwiched between 2 RuvA tetramers; dsDNA enters through RuvA and exits via RuvB. An RuvB hexamer assembles on each DNA strand where it exits the tetramer. Each RuvB hexamer is contacted by two RuvA subunits (via domain III) on 2 adjacent RuvB subunits; this complex drives branch migration. In the full resolvosome a probable DNA-RuvA(4)-RuvB(12)-RuvC(2) complex forms which resolves the HJ.

Its subcellular location is the cytoplasm. Functionally, the RuvA-RuvB-RuvC complex processes Holliday junction (HJ) DNA during genetic recombination and DNA repair, while the RuvA-RuvB complex plays an important role in the rescue of blocked DNA replication forks via replication fork reversal (RFR). RuvA specifically binds to HJ cruciform DNA, conferring on it an open structure. The RuvB hexamer acts as an ATP-dependent pump, pulling dsDNA into and through the RuvAB complex. HJ branch migration allows RuvC to scan DNA until it finds its consensus sequence, where it cleaves and resolves the cruciform DNA. This chain is Holliday junction branch migration complex subunit RuvA, found in Deinococcus radiodurans (strain ATCC 13939 / DSM 20539 / JCM 16871 / CCUG 27074 / LMG 4051 / NBRC 15346 / NCIMB 9279 / VKM B-1422 / R1).